The chain runs to 131 residues: Global transcriptional regulator Spx (131 aa).

Cysteine 10 and cysteine 13 are joined by a disulfide.

It belongs to the ArsC family. Spx subfamily. Interacts with the C-terminal domain of the alpha subunit of the RNAP.

It localises to the cytoplasm. Its function is as follows. Global transcriptional regulator that plays a key role in stress response and exerts either positive or negative regulation of genes. Acts by interacting with the C-terminal domain of the alpha subunit of the RNA polymerase (RNAP). This interaction can enhance binding of RNAP to the promoter region of target genes and stimulate their transcription, or block interaction of RNAP with activator. This chain is Global transcriptional regulator Spx, found in Staphylococcus epidermidis (strain ATCC 35984 / DSM 28319 / BCRC 17069 / CCUG 31568 / BM 3577 / RP62A).